We begin with the raw amino-acid sequence, 595 residues long: Sorting nexin-9 (595 aa).

One can recognise an SH3 domain in the interval 1–62 (MATKARVMYD…PTDYVEILPS (62 aa)). The interval 91–201 (SSSAASNNHQ…GNSRASSSSM (111 aa)) is disordered. Composition is skewed to polar residues over residues 111–121 (WSASKSGNWES) and 135–145 (QRNTNTPNNWD). Phosphoserine is present on residues serine 116 and serine 121. Residues 160–169 (GDDDDWDEDW) are compositionally biased toward acidic residues. Positions 191–201 (RGNSRASSSSM) are enriched in polar residues. Phosphoserine occurs at positions 197 and 200. The tract at residues 201–213 (MKIPLNKFPGFAK) is critical for tubulation activity. Residue threonine 216 is modified to Phosphothreonine. Phosphotyrosine is present on tyrosine 239. Positions 250-361 (FDCVVADPRK…QFLNFRDEKE (112 aa)) constitute a PX domain. A 1,2-diacyl-sn-glycero-3-phospho-(1D-myo-inositol-4,5-bisphosphate)-binding residues include arginine 286, lysine 288, and arginine 327. Lysine 288 is subject to N6-acetyllysine. One can recognise a BAR domain in the interval 392–595 (LVEIEQKCEA…RQALSRFPVM (204 aa)).

This sequence belongs to the sorting nexin family. In terms of assembly, homodimer, and homooligomer. Heterodimer with SNX18. Interacts with ITCH. Interacts (via SH3 domain) with TNK2, WASL and ACTR3. Identified in a complex with TNK2 and clathrin heavy chains. Identified in a complex with the AP-2 complex, clathrin and DNM2. Interacts (via SH3 domain) with DNM1 and DNM2. Identified in an oligomeric complex containing DNM1 and SNX9. Interacts with FCHSD1. Interacts with ADAM9 and ADAM15 cytoplasmic tails. In terms of processing, ubiquitinated by ITCH. Phosphorylated on tyrosine residues by TNK2. Phosphorylation promotes its activity in the degradation of EGFR. As to expression, widely expressed, with highest levels in heart and placenta, and lowest levels in thymus and peripheral blood leukocytes.

Its subcellular location is the cytoplasmic vesicle membrane. The protein resides in the cell membrane. It is found in the cytoplasmic vesicle. It localises to the clathrin-coated vesicle. The protein localises to the golgi apparatus. Its subcellular location is the trans-Golgi network. The protein resides in the cell projection. It is found in the ruffle. It localises to the cytoplasm. In terms of biological role, involved in endocytosis and intracellular vesicle trafficking, both during interphase and at the end of mitosis. Required for efficient progress through mitosis and cytokinesis. Required for normal formation of the cleavage furrow at the end of mitosis. Plays a role in endocytosis via clathrin-coated pits, but also clathrin-independent, actin-dependent fluid-phase endocytosis. Plays a role in macropinocytosis. Promotes internalization of TNFR. Promotes degradation of EGFR after EGF signaling. Stimulates the GTPase activity of DNM1. Promotes DNM1 oligomerization. Promotes activation of the Arp2/3 complex by WASL, and thereby plays a role in the reorganization of the F-actin cytoskeleton. Binds to membranes enriched in phosphatidylinositol 4,5-bisphosphate and promotes membrane tubulation. Has lower affinity for membranes enriched in phosphatidylinositol 3-phosphate. The polypeptide is Sorting nexin-9 (SNX9) (Homo sapiens (Human)).